The primary structure comprises 558 residues: MSYKSDIEIARAANKLPIQEIGAKLGMKNDDLLPYGHDKAKVSQEFINSVQGNEDGKLVLVTAINPTPAGEGKTTTTVGLGDGLNRIGKNAMICIREASLGPNFGMKGGAAGGGMAQVVPMEEMNLHFTGDFHAITSAHSLLSAMIDNHIYWGNEQEIDIRRVAWRRVVDMNDRALRQITASLGGVSNGFPRETGFDITVASEVMAILCLANDLKDLEKRLGDIIVAYRRDKTPVYCRDIKAEGAMTVLLKDAMQPNLVQTLENNPAFVHGGPFANIAHGCNSVIATKTALKVADYVVTEAGFGADLGAEKFMNIKCRKAGIAPSAVVVVATVRAMKMNGGVAKADLGAENVEAVKNGCANLGRHIENVKSFGVPAVVAINHFVTDTDAEINAVKEYVASHGVEAILSRHWELGSEGSAPLAEKVVELVEGGGANFGPLYPDEMPLFEKIETIAKRIYRADEVLADAKIRNQLKEWEEAGYGHLPVCMAKTQYSFSTDPNLRGAPTGHSVPVREVRLSAGAGFIVVVCGEIMTMPGLPRTPAAESICLNEEGLIEGLF.

67-74 (TPAGEGKT) provides a ligand contact to ATP.

This sequence belongs to the formate--tetrahydrofolate ligase family.

The enzyme catalyses (6S)-5,6,7,8-tetrahydrofolate + formate + ATP = (6R)-10-formyltetrahydrofolate + ADP + phosphate. Its pathway is one-carbon metabolism; tetrahydrofolate interconversion. The protein is Formate--tetrahydrofolate ligase of Ruegeria sp. (strain TM1040) (Silicibacter sp.).